We begin with the raw amino-acid sequence, 174 residues long: Gamma-crystallin C (174 aa).

Beta/gamma crystallin 'Greek key' domains follow at residues 2-40 (GKIT…RVDS) and 41-83 (GCWM…CLIP). Cysteine 23 is modified (S-methylcysteine). Residues 84 to 87 (QTSS) form a connecting peptide region. 2 Beta/gamma crystallin 'Greek key' domains span residues 88–128 (HRLR…HVLE) and 129–171 (GCWV…RRVV).

It belongs to the beta/gamma-crystallin family. Monomer.

In terms of biological role, crystallins are the dominant structural components of the vertebrate eye lens. The chain is Gamma-crystallin C (CRYGC) from Canis lupus familiaris (Dog).